The sequence spans 264 residues: Glutamate racemase (264 aa).

Residues 11–12 (DS) and 43–44 (YG) each bind substrate. Catalysis depends on cysteine 74, which acts as the Proton donor/acceptor. 75 to 76 (NT) serves as a coordination point for substrate. Cysteine 193 functions as the Proton donor/acceptor in the catalytic mechanism. 194-195 (TH) serves as a coordination point for substrate.

This sequence belongs to the aspartate/glutamate racemases family.

It catalyses the reaction L-glutamate = D-glutamate. The protein operates within cell wall biogenesis; peptidoglycan biosynthesis. In terms of biological role, provides the (R)-glutamate required for cell wall biosynthesis. The sequence is that of Glutamate racemase from Bifidobacterium longum (strain DJO10A).